A 186-amino-acid polypeptide reads, in one-letter code: Elongation factor P (186 aa).

This sequence belongs to the elongation factor P family.

Its subcellular location is the cytoplasm. It participates in protein biosynthesis; polypeptide chain elongation. In terms of biological role, involved in peptide bond synthesis. Stimulates efficient translation and peptide-bond synthesis on native or reconstituted 70S ribosomes in vitro. Probably functions indirectly by altering the affinity of the ribosome for aminoacyl-tRNA, thus increasing their reactivity as acceptors for peptidyl transferase. The chain is Elongation factor P from Maridesulfovibrio salexigens (strain ATCC 14822 / DSM 2638 / NCIMB 8403 / VKM B-1763) (Desulfovibrio salexigens).